The sequence spans 71 residues: DNA-directed RNA polymerase subunit omega (71 aa).

The protein belongs to the RNA polymerase subunit omega family. In terms of assembly, the RNAP catalytic core consists of 2 alpha, 1 beta, 1 beta' and 1 omega subunit. When a sigma factor is associated with the core the holoenzyme is formed, which can initiate transcription.

It carries out the reaction RNA(n) + a ribonucleoside 5'-triphosphate = RNA(n+1) + diphosphate. In terms of biological role, promotes RNA polymerase assembly. Latches the N- and C-terminal regions of the beta' subunit thereby facilitating its interaction with the beta and alpha subunits. The polypeptide is DNA-directed RNA polymerase subunit omega (Alkaliphilus oremlandii (strain OhILAs) (Clostridium oremlandii (strain OhILAs))).